A 651-amino-acid polypeptide reads, in one-letter code: Protein EXECUTER 2, chloroplastic (651 aa).

The N-terminal 69 residues, 1–69 (MATTQPCLIG…KAPSLSCLRN (69 aa)), are a transit peptide targeting the chloroplast. The region spanning 103–138 (ESVVSLLKSQLEDAVEKEDFEEAVKLKQAISEATVD) is the UVR domain. The disordered stretch occupies residues 330 to 359 (DATEELVGEGTEETNSSDDEEEVEEEENDS).

It is found in the plastid. The protein localises to the chloroplast. In terms of biological role, together with EX1, enables higher plants to perceive singlet oxygen as a stress signal in plastid that activates a genetically determined nuclear stress response program which triggers a programmed cell death (PCD). This transfer of singlet oxygen-induced stress-related signals from the plastid to the nucleus that triggers genetically controlled PCD pathway is unique to photosynthetic eukaryotes and operates under mild stress conditions, impeding photosystem II (PSII) without causing photooxidative damage of the plant. This is Protein EXECUTER 2, chloroplastic from Arabidopsis thaliana (Mouse-ear cress).